A 62-amino-acid chain; its full sequence is Conotoxin Gm5.2 (62 aa).

An N-terminal signal peptide occupies residues 1–22 (MRCLPVFVILLLLIASAPSVDA). Positions 23 to 49 (QPKTKDDVPLAPLHDNIRSTLQTLRKK) are excised as a propeptide. Serine 60 carries the serine amide modification.

This sequence belongs to the conotoxin T superfamily. Post-translationally, contains 2 disulfide bonds that can be either 'C1-C3, C2-C4' or 'C1-C4, C2-C3', since these disulfide connectivities have been observed for conotoxins with cysteine framework V (for examples, see AC P0DQQ7 and AC P81755). Expressed by the venom duct.

It is found in the secreted. This chain is Conotoxin Gm5.2, found in Conus gloriamaris (Glory-of-the-Sea cone).